We begin with the raw amino-acid sequence, 535 residues long: CTP synthase (535 aa).

Residues 1–268 (MSTKYIFVTG…DQIVCDHLKL (268 aa)) are amidoligase domain. Position 14 (S14) interacts with CTP. Residue S14 participates in UTP binding. 15 to 20 (SMGKGI) provides a ligand contact to ATP. Y55 provides a ligand contact to L-glutamine. D72 is a binding site for ATP. Mg(2+) contacts are provided by D72 and E142. Residues 149-151 (DME), 189-194 (KTKIAQ), and K225 each bind CTP. UTP-binding positions include 189-194 (KTKIAQ) and K225. Residues 293–535 (KIALVGKYVE…FIRVAVENSK (243 aa)) form the Glutamine amidotransferase type-1 domain. L-glutamine is bound at residue G355. C382 serves as the catalytic Nucleophile; for glutamine hydrolysis. Residues 383–386 (LGMQ), E406, and R464 contribute to the L-glutamine site. Catalysis depends on residues H509 and E511.

The protein belongs to the CTP synthase family. Homotetramer.

The enzyme catalyses UTP + L-glutamine + ATP + H2O = CTP + L-glutamate + ADP + phosphate + 2 H(+). It catalyses the reaction L-glutamine + H2O = L-glutamate + NH4(+). It carries out the reaction UTP + NH4(+) + ATP = CTP + ADP + phosphate + 2 H(+). The protein operates within pyrimidine metabolism; CTP biosynthesis via de novo pathway; CTP from UDP: step 2/2. Its activity is regulated as follows. Allosterically activated by GTP, when glutamine is the substrate; GTP has no effect on the reaction when ammonia is the substrate. The allosteric effector GTP functions by stabilizing the protein conformation that binds the tetrahedral intermediate(s) formed during glutamine hydrolysis. Inhibited by the product CTP, via allosteric rather than competitive inhibition. In terms of biological role, catalyzes the ATP-dependent amination of UTP to CTP with either L-glutamine or ammonia as the source of nitrogen. Regulates intracellular CTP levels through interactions with the four ribonucleotide triphosphates. This chain is CTP synthase, found in Lactococcus lactis subsp. lactis (strain IL1403) (Streptococcus lactis).